A 499-amino-acid polypeptide reads, in one-letter code: Glycerol kinase (499 aa).

Thr13 provides a ligand contact to ADP. ATP is bound by residues Thr13, Thr14, and Ser15. Thr13 is a sn-glycerol 3-phosphate binding site. Arg17 is a binding site for ADP. Sn-glycerol 3-phosphate is bound by residues Arg83, Glu84, Tyr135, and Asp245. Residues Arg83, Glu84, Tyr135, Asp245, and Gln246 each contribute to the glycerol site. Thr267 and Gly310 together coordinate ADP. Thr267, Gly310, Gln314, and Ala411 together coordinate ATP. Positions 411 and 415 each coordinate ADP.

This sequence belongs to the FGGY kinase family.

The enzyme catalyses glycerol + ATP = sn-glycerol 3-phosphate + ADP + H(+). It participates in polyol metabolism; glycerol degradation via glycerol kinase pathway; sn-glycerol 3-phosphate from glycerol: step 1/1. Inhibited by fructose 1,6-bisphosphate (FBP). Functionally, key enzyme in the regulation of glycerol uptake and metabolism. Catalyzes the phosphorylation of glycerol to yield sn-glycerol 3-phosphate. This is Glycerol kinase from Xylella fastidiosa (strain M12).